Here is a 100-residue protein sequence, read N- to C-terminus: ATP synthase subunit g 2, mitochondrial (100 aa).

Belongs to the ATPase g subunit family. In terms of assembly, F-type ATPases have 2 components, CF(1) - the catalytic core - and CF(0) - the membrane proton channel. CF(0) seems to have nine subunits: a, b, c, d, e, f, g, F6 and 8 (or A6L).

It is found in the mitochondrion membrane. In terms of biological role, mitochondrial membrane ATP synthase (F(1)F(0) ATP synthase or Complex V) produces ATP from ADP in the presence of a proton gradient across the membrane which is generated by electron transport complexes of the respiratory chain. F-type ATPases consist of two structural domains, F(1) - containing the extramembraneous catalytic core, and F(0) - containing the membrane proton channel, linked together by a central stalk and a peripheral stalk. During catalysis, ATP synthesis in the catalytic domain of F(1) is coupled via a rotary mechanism of the central stalk subunits to proton translocation. Part of the complex F(0) domain. Minor subunit located with subunit a in the membrane. This is ATP synthase subunit g 2, mitochondrial from Homo sapiens (Human).